Consider the following 311-residue polypeptide: Ribonuclease 3 (311 aa).

An RNase III domain is found at 20-145 (YLCFYRILGF…FIGAIYLDQG (126 aa)). Residue E62 participates in Mg(2+) binding. D66 is a catalytic residue. N131 and E134 together coordinate Mg(2+). The active site involves E134. The region spanning 173 to 242 (NFKSKLIEWS…AQMAIKKVKD (70 aa)) is the DRBM domain. A disordered region spans residues 250–311 (NEAKSQHSKP…EVEATETEKE (62 aa)). Positions 262 to 288 (VETESVEPELTESETMEPDTLETEAPE) are enriched in acidic residues.

The protein belongs to the ribonuclease III family. As to quaternary structure, homodimer. Mg(2+) is required as a cofactor.

The protein resides in the cytoplasm. The enzyme catalyses Endonucleolytic cleavage to 5'-phosphomonoester.. In terms of biological role, digests double-stranded RNA. Involved in the processing of primary rRNA transcript to yield the immediate precursors to the large and small rRNAs (23S and 16S). Processes some mRNAs, and tRNAs when they are encoded in the rRNA operon. Processes pre-crRNA and tracrRNA of type II CRISPR loci if present in the organism. The chain is Ribonuclease 3 from Bacteroides thetaiotaomicron (strain ATCC 29148 / DSM 2079 / JCM 5827 / CCUG 10774 / NCTC 10582 / VPI-5482 / E50).